Here is a 968-residue protein sequence, read N- to C-terminus: MKHLTASEVRSTFINFFREKKEHTYVHSSSVIPHDDPTLLFANAGMNQFKPLFLGIADPNSDLAKLKRAVNTQKCIRAGGKHNDLDDVGKDVYHHTYFEMLGNWSFGDYFKKEIITWAWELLTTVYGIPAERLYVSVFGGDEANGVPADSEARDIWRSVGVPDERILNFGMKDNFWEMGDVGPCGPCSEIHYDRIGNRDASHLVNADDPMVVEIWNLVFIQFNREEGGVLKPLPAKHIDCGLGLERLIAVMQDKTSNYDTDIFQPIFEAIHKGSGVRAYTGFIGDEDKDGVDMAYRVVADHVRTLTIALSDGGRPDNSGRGYVLRRILRRGVRYASEKLNAQPGFFASLVPVVISILGETFPELSRDPVTVMDIINDEEKQFLKTLSRGRVLFQRAVQSLPEGTMTFPGDVSWRLYDTYGFPADLTQLMAEEKGLSVDNTAFEEARRKAIETSSAGTGKFRDTLDLDVHALAELQQKGVPTTDDSPKYAYTFTGEGSDAVYKFEPCVGKILAIRRDGKFVDQLAAGEEGAILLDRTNFYAEQGGQIYDVGVLTKVNDESNEFNVSNCQVRGGYIVLVGSAEGSFSVGDQVNERFDEDRKQLIMKNHTGTHVLNYALRKVLADSDQKGSLVAPDRMRFDFTNKAGMTVQQVKKAEEYAQQLIDTKGQVYAKNSPLGEAKKVKGLRAMFDETYPDPVRVVAVGTPVEQLLQNPDAEEGQNTTVEFCGGTHLQNVSHIGRIVIASEEAIAKGIRRIVALTGPEAERAIARADRLTARLEEESKHADKKDELLANKDKFKALQKKIQEIVDEANGAQLPYWRKDSIREKAKAIQKTLDGYTKAQQAAVAEKVLGEAKELAAVAEQPTVLVHVFAANANSKAIDNALKLLKDTKAVMAFSVNEDSGKVLCLAKVDKSLVSNGLKANEWVNEVCTVLGGKGGGKDANAQLTGENVDKLDAAVELAQKFALAAIN.

Residues Arg-77, His-95, Trp-176, and 214–216 each bind ATP; that span reads IWN. L-alanine-binding residues include Asn-216 and Asp-239. Position 243 (Gly-243) interacts with ATP. Zn(2+) contacts are provided by His-606, His-610, Cys-724, and His-728.

This sequence belongs to the class-II aminoacyl-tRNA synthetase family. Monomer. It depends on Zn(2+) as a cofactor.

The protein resides in the cytoplasm. The catalysed reaction is tRNA(Ala) + L-alanine + ATP = L-alanyl-tRNA(Ala) + AMP + diphosphate. Its function is as follows. Catalyzes the attachment of alanine to tRNA(Ala) in a two-step reaction: alanine is first activated by ATP to form Ala-AMP and then transferred to the acceptor end of tRNA(Ala). Also edits incorrectly charged tRNA(Ala) via its editing domain. This chain is Alanine--tRNA ligase, cytoplasmic, found in Caenorhabditis elegans.